Reading from the N-terminus, the 351-residue chain is Fe(3+) ions import ATP-binding protein FbpC (351 aa).

One can recognise an ABC transporter domain in the interval 9-239; the sequence is LVLKNINKTF…PNSLFLANFM (231 aa). 41-48 is a binding site for ATP; that stretch reads GPSGCGKT.

Belongs to the ABC transporter superfamily. Fe(3+) ion importer (TC 3.A.1.10) family. The complex is composed of two ATP-binding proteins (FbpC), two transmembrane proteins (FbpB) and a solute-binding protein (FbpA).

It localises to the cell inner membrane. The enzyme catalyses Fe(3+)(out) + ATP + H2O = Fe(3+)(in) + ADP + phosphate + H(+). Functionally, part of the ABC transporter complex FbpABC involved in Fe(3+) ions import. Responsible for energy coupling to the transport system. This Mannheimia succiniciproducens (strain KCTC 0769BP / MBEL55E) protein is Fe(3+) ions import ATP-binding protein FbpC.